Here is a 367-residue protein sequence, read N- to C-terminus: Phospho-N-acetylmuramoyl-pentapeptide-transferase (367 aa).

10 consecutive transmembrane segments (helical) span residues 30–50 (AAAI…IALL), 71–91 (LPTM…LLWA), 94–114 (TDPH…IGFI), 138–158 (ISLG…SVLM), 169–189 (LTID…TALS), 200–220 (GLAA…AYLA), 237–257 (GGEI…FLWF), 264–284 (IIMG…TALL), 289–309 (LLLP…SLQV), and 344–364 (KIVI…LMTL).

Belongs to the glycosyltransferase 4 family. MraY subfamily. It depends on Mg(2+) as a cofactor.

The protein localises to the cell inner membrane. The enzyme catalyses UDP-N-acetyl-alpha-D-muramoyl-L-alanyl-gamma-D-glutamyl-meso-2,6-diaminopimeloyl-D-alanyl-D-alanine + di-trans,octa-cis-undecaprenyl phosphate = di-trans,octa-cis-undecaprenyl diphospho-N-acetyl-alpha-D-muramoyl-L-alanyl-D-glutamyl-meso-2,6-diaminopimeloyl-D-alanyl-D-alanine + UMP. The protein operates within cell wall biogenesis; peptidoglycan biosynthesis. Its function is as follows. Catalyzes the initial step of the lipid cycle reactions in the biosynthesis of the cell wall peptidoglycan: transfers peptidoglycan precursor phospho-MurNAc-pentapeptide from UDP-MurNAc-pentapeptide onto the lipid carrier undecaprenyl phosphate, yielding undecaprenyl-pyrophosphoryl-MurNAc-pentapeptide, known as lipid I. This chain is Phospho-N-acetylmuramoyl-pentapeptide-transferase, found in Chlorobium phaeovibrioides (strain DSM 265 / 1930) (Prosthecochloris vibrioformis (strain DSM 265)).